The following is a 147-amino-acid chain: Allograft inflammatory factor 1 (147 aa).

Ser2 carries the post-translational modification N-acetylserine. The residue at position 11 (Lys11) is an N6-acetyllysine. The residue at position 39 (Ser39) is a Phosphoserine. Positions 45 to 80 (SKLEAFKKKYMEFDLNEDGGIDIMSLKRMMEKLGVP) constitute an EF-hand 1 domain. Residues Asp58, Asn60, and Asp62 each coordinate Ca(2+). In terms of domain architecture, EF-hand 2; degenerate spans 81–115 (KTHLELKKLIMEVSSGPGETFSYSDFLKMMLGKRS). The interval 128 to 147 (AREQEKPTGLPAKKAISELP) is disordered.

In terms of processing, phosphorylated on serine residues.

The protein resides in the cytoplasm. The protein localises to the cytoskeleton. It is found in the cell projection. It localises to the ruffle membrane. Its subcellular location is the phagocytic cup. May play a role in macrophage activation and function. This is Allograft inflammatory factor 1 (AIF1) from Bos taurus (Bovine).